Here is a 274-residue protein sequence, read N- to C-terminus: 2,3,4,5-tetrahydropyridine-2,6-dicarboxylate N-succinyltransferase (274 aa).

Positions 103 and 140 each coordinate substrate.

Belongs to the transferase hexapeptide repeat family. In terms of assembly, homotrimer.

Its subcellular location is the cytoplasm. The catalysed reaction is (S)-2,3,4,5-tetrahydrodipicolinate + succinyl-CoA + H2O = (S)-2-succinylamino-6-oxoheptanedioate + CoA. It functions in the pathway amino-acid biosynthesis; L-lysine biosynthesis via DAP pathway; LL-2,6-diaminopimelate from (S)-tetrahydrodipicolinate (succinylase route): step 1/3. This is 2,3,4,5-tetrahydropyridine-2,6-dicarboxylate N-succinyltransferase from Actinobacillus pleuropneumoniae serotype 5b (strain L20).